A 131-amino-acid chain; its full sequence is MSSTVKAANWRFVEVGRVVLVDNKELATIVEIIDQKRVLIDGPKIQRQAIALAKIVLTPIVLPNLPRGSRTATVTKKWAAADIDAKWAASGWAKKLANKERRSQLSDFERFQVMVLKKQRRFATKKALVKA.

The protein belongs to the eukaryotic ribosomal protein eL14 family. As to quaternary structure, component of the large ribosomal subunit. Mature ribosomes consist of a small (40S) and a large (60S) subunit. The 40S subunit contains about 32 different proteins and 1 molecule of RNA (18S). The 60S subunit contains 45 different proteins and 3 molecules of RNA (25S, 5.8S and 5S).

The protein resides in the cytoplasm. Functionally, component of the ribosome, a large ribonucleoprotein complex responsible for the synthesis of proteins in the cell. The small ribosomal subunit (SSU) binds messenger RNAs (mRNAs) and translates the encoded message by selecting cognate aminoacyl-transfer RNA (tRNA) molecules. The large subunit (LSU) contains the ribosomal catalytic site termed the peptidyl transferase center (PTC), which catalyzes the formation of peptide bonds, thereby polymerizing the amino acids delivered by tRNAs into a polypeptide chain. The nascent polypeptides leave the ribosome through a tunnel in the LSU and interact with protein factors that function in enzymatic processing, targeting, and the membrane insertion of nascent chains at the exit of the ribosomal tunnel. The sequence is that of Large ribosomal subunit protein eL14 from Candida albicans (strain SC5314 / ATCC MYA-2876) (Yeast).